Consider the following 195-residue polypeptide: Dephospho-CoA kinase (195 aa).

The DPCK domain maps to 3 to 195 (KIGLTGGIGS…ANMKNVIAEI (193 aa)). Residue 11-16 (GSGKST) coordinates ATP.

This sequence belongs to the CoaE family.

It is found in the cytoplasm. It catalyses the reaction 3'-dephospho-CoA + ATP = ADP + CoA + H(+). It participates in cofactor biosynthesis; coenzyme A biosynthesis; CoA from (R)-pantothenate: step 5/5. In terms of biological role, catalyzes the phosphorylation of the 3'-hydroxyl group of dephosphocoenzyme A to form coenzyme A. This is Dephospho-CoA kinase from Corynebacterium glutamicum (Brevibacterium saccharolyticum).